The primary structure comprises 210 residues: Probable GTP-binding protein EngB (210 aa).

The region spanning phenylalanine 22–glutamate 198 is the EngB-type G domain. GTP-binding positions include glycine 30–serine 37, glycine 57–leucine 61, aspartate 75–glycine 78, threonine 142–aspartate 145, and threonine 177–serine 179. Positions 37 and 59 each coordinate Mg(2+).

This sequence belongs to the TRAFAC class TrmE-Era-EngA-EngB-Septin-like GTPase superfamily. EngB GTPase family. Requires Mg(2+) as cofactor.

In terms of biological role, necessary for normal cell division and for the maintenance of normal septation. The sequence is that of Probable GTP-binding protein EngB from Flavobacterium johnsoniae (strain ATCC 17061 / DSM 2064 / JCM 8514 / BCRC 14874 / CCUG 350202 / NBRC 14942 / NCIMB 11054 / UW101) (Cytophaga johnsonae).